The following is a 138-amino-acid chain: MTKPIPRIGSRRNGRIGSRKNARRIPKGVIHVQASFNNTIVTVSDVRGQVISWASAGTSGFKGTRRGTPYAAQAAAVNAIRTIIDQDMQRAEVMIKGAGFGRDAALRAIRRSGILLSFVRDVTPMPHNGCRPPQKRRV.

Positions 1–22 (MTKPIPRIGSRRNGRIGSRKNA) are disordered. Residues 9–22 (GSRRNGRIGSRKNA) are compositionally biased toward basic residues.

It belongs to the universal ribosomal protein uS11 family. In terms of assembly, part of the 30S ribosomal subunit.

It is found in the plastid. The protein localises to the chloroplast. The chain is Small ribosomal subunit protein uS11c from Dioscorea elephantipes (Elephant's foot yam).